Reading from the N-terminus, the 398-residue chain is MMGTILNPYFGEFGGMYVPEILVPVLKQLEKAFVEAQHDPVFQQEFQDLLKNYAGRPTALTLCRNLTKGTKTKLYLKREDLLHGGAHKTNQVLGQILLAKRMGKTRIIAETGAGQHGVATALACAMLDMPCRVYMGAKDVERQSPNVFRMRLMGAEVIPVEKGSCSLKDACCEAMRDWSANYETTHYLLGTAAGPHPFPTIVREFQKMIGEETKCQILAKENRLPDAVIAAVGGGSNAIGMFAEFIAEKSVQLIGIEPAGNGIHTGKHGAPLRHGSIGIYFGMKSPIMQTQDGQIEESYSISAGLDFPSVGPEHAYLHTIGRAQYESITDDEAIEAFQALAKHEGIIPALESSHALAYALKLIVQNPEKEQLLVVNLSGRGDKDIFTVDKILTEKGII.

The residue at position 88 (K88) is an N6-(pyridoxal phosphate)lysine.

The protein belongs to the TrpB family. Tetramer of two alpha and two beta chains. Pyridoxal 5'-phosphate serves as cofactor.

It carries out the reaction (1S,2R)-1-C-(indol-3-yl)glycerol 3-phosphate + L-serine = D-glyceraldehyde 3-phosphate + L-tryptophan + H2O. Its pathway is amino-acid biosynthesis; L-tryptophan biosynthesis; L-tryptophan from chorismate: step 5/5. Functionally, the beta subunit is responsible for the synthesis of L-tryptophan from indole and L-serine. In Histophilus somni (strain 2336) (Haemophilus somnus), this protein is Tryptophan synthase beta chain.